Here is a 668-residue protein sequence, read N- to C-terminus: Protein ENTREP3 (668 aa).

A run of 3 helical transmembrane segments spans residues 34-54 (LLTL…FSMV), 67-87 (SCPS…IVSW), and 91-111 (FTLV…LSMA). N160 carries an N-linked (GlcNAc...) asparagine glycan. Residues 174 to 194 (LFSVCGLTICAAIICTLSAIV) traverse the membrane as a helical segment. Phosphoserine is present on residues S358 and S389. Disordered stretches follow at residues 386–419 (FEES…PTAA), 442–503 (RVPR…SSDT), and 550–570 (SAEK…SGPA). Residues 398 to 407 (AARSYSCSAP) show a composition bias toward low complexity. S493 bears the Phosphoserine mark. Residue S574 is modified to Phosphoserine. Disordered stretches follow at residues 597 to 620 (KAPD…WGRP) and 645 to 668 (GRRL…ETGL). Positions 655 to 668 (HSLSLNGGSRETGL) are enriched in polar residues.

The protein belongs to the ENTREP family. As to quaternary structure, may interact with WWOX. Widely expressed.

It is found in the membrane. This is Protein ENTREP3 from Homo sapiens (Human).